The sequence spans 550 residues: Arginine--tRNA ligase (550 aa).

A 'HIGH' region motif is present at residues 122 to 132; it reads GNPTGPLHLAH.

The protein belongs to the class-I aminoacyl-tRNA synthetase family. As to quaternary structure, monomer.

It is found in the cytoplasm. The enzyme catalyses tRNA(Arg) + L-arginine + ATP = L-arginyl-tRNA(Arg) + AMP + diphosphate. The polypeptide is Arginine--tRNA ligase (Tropheryma whipplei (strain TW08/27) (Whipple's bacillus)).